A 273-amino-acid polypeptide reads, in one-letter code: ATP synthase subunit a (273 aa).

7 helical membrane-spanning segments follow: residues 34–54 (IINMDTIFWSIFAGVVGCLFM), 94–114 (FIAPLALTVFVWVALMNSLDF), 115–135 (LPVDMFSAFFHAVGLDSLITH), 143–163 (DLNGTMGIALGVFALMIFYNI), 171–191 (FVHELFAAPFGIWLAPFNLLL), 218–238 (FLLIALLGSTATAFGFFGHVV), and 244–264 (AIFHILIVFLQAFIFMMLTLV).

This sequence belongs to the ATPase A chain family. In terms of assembly, F-type ATPases have 2 components, CF(1) - the catalytic core - and CF(0) - the membrane proton channel. CF(1) has five subunits: alpha(3), beta(3), gamma(1), delta(1), epsilon(1). CF(0) has three main subunits: a(1), b(2) and c(9-12). The alpha and beta chains form an alternating ring which encloses part of the gamma chain. CF(1) is attached to CF(0) by a central stalk formed by the gamma and epsilon chains, while a peripheral stalk is formed by the delta and b chains.

The protein localises to the cell inner membrane. Its function is as follows. Key component of the proton channel; it plays a direct role in the translocation of protons across the membrane. The polypeptide is ATP synthase subunit a (Janthinobacterium sp. (strain Marseille) (Minibacterium massiliensis)).